The sequence spans 1182 residues: NACHT, LRR and PYD domains-containing protein 1a (1182 aa).

The tract at residues 1 to 23 (MEESQSKQESSTKVAQHEGQEDV) is disordered. The NACHT domain maps to 133 to 442 (QLVIIEGAAG…EFFAAMSYIL (310 aa)). 139 to 146 (GAAGIGKS) contacts ATP. LRR repeat units lie at residues 634–655 (NLEE…SLCT), 691–711 (SLTE…KMLC), and 720–743 (NLSI…RTLE). Residues 780 to 806 (QQRQQSGDKHMEPLGTEDEFWGPTGPV) form a disordered region. Residues 799–932 (FWGPTGPVTT…HYAVLENPSF (134 aa)) form a ZU5 region. One can recognise an FIIND domain in the interval 799-1082 (FWGPTGPVTT…LRPALPKIAT (284 aa)). Residues 933-1082 (SPMGILLRMI…LRPALPKIAT (150 aa)) form a UPA region. Residues 1092-1175 (HFMDQHREQL…HLVMDILEKL (84 aa)) enclose the CARD domain.

The protein belongs to the NLRP family. In terms of assembly, interacts (via LRR repeats) with BCL2 and BCL2L1 (via the loop between motifs BH4 and BH3). Interacts with NOD2; this interaction is enhanced in the presence of muramyl dipeptide (MDP) and increases IL1B release. Interacts with EIF2AK2/PKR; this interaction requires EIF2AK2 activity, is accompanied by EIF2AK2 autophosphorylation and promotes inflammasome assembly in response to danger-associated signals. Interacts with MEFV; this interaction targets Nlrp1a to degradation by autophagy, hence preventing excessive IL1B- and IL18-mediated inflammation. Interacts with DPP9; leading to inhibit activation of the inflammasome. DPP9 acts via formation of a ternary complex, composed of a DPP9 homodimer, one full-length Nlrp1a protein, and one cleaved C-terminus of Nlrp1a (NACHT, LRR and PYD domains-containing protein 1a, C-terminus). Interacts with DPP8; leading to inhibit activation of the inflammasome, probably via formation of a ternary complex with DPP8. Interacts with the C-terminal part of Nlrp1a (NACHT, LRR and PYD domains-containing protein 1a, C-terminus) in absence of pathogens and other damage-associated signals. As to quaternary structure, interacts with the N-terminal part of Nlrp1a (NACHT, LRR and PYD domains-containing protein 1a, N-terminus) in absence of pathogens and other damage-associated signals. Homomultimer; forms the Nlrp1a inflammasome polymeric complex, a filament composed of homopolymers of this form in response to pathogens and other damage-associated signals. Interacts (via CARD domain) with CASP1 (via CARD domain); leading to CASP1 activation. Autocatalytically cleaved. Autocatalytic cleavage in FIIND region occurs constitutively, prior to activation signals, and is required for inflammasome activity (IL1B release), possibly by facilitating CASP1 binding. Both N- and C-terminal parts remain associated non-covalently. In terms of processing, ubiquitinated in response to pathogen-associated signals, leading to its degradation by the proteasome and subsequent release of the cleaved C-terminal part of the protein (NACHT, LRR and PYD domains-containing protein 1a, C-terminus), which polymerizes and forms the Nlrp1a inflammasome. As to expression, highly expressed in hematopoietic stem cells and progenitor cells of both myeloid and lymphoid origin. The expression is highly strain-dependent. Not expressed in Balb/cJ animals, but widely expressed in C57BL/6J. Expressed in macrophages resistant to Bacillus anthracis lethal toxin, but not in toxin-sensitive macrophages, except in CAST/EiJ strain.

It is found in the cytoplasm. It localises to the cytosol. Its subcellular location is the nucleus. The protein resides in the inflammasome. With respect to regulation, nlrp1a inflammasome is activated by pathogens and other damage-associated signals: activation promotes ubiquitination and degradation of the N-terminal part, releasing the cleaved C-terminal part of the protein (NACHT, LRR and PYD domains-containing protein 1a, C-terminus), which polymerizes and forms the Nlrp1a inflammasome. Nlrp1a inflammasome is inhibited by DPP8 and DPP9, which sequester the C-terminal fragment of Nlrp1a (NACHT, LRR and PYD domains-containing protein 1a, C-terminus) in a ternary complex, thereby preventing Nlrp1a oligomerization and activation. Nlrp1a inflammasome is activated by Val-boroPro (Talabostat, PT-100), an inhibitor of dipeptidyl peptidases DPP8 and DPP9. Val-boroPro relieves inhibition of DPP8 and/or DPP9 by promoting disruption of the ternary complex, releasing its C-terminal part from autoinhibition. Acts as the sensor component of the Nlrp1a inflammasome, which mediates inflammasome activation in response to various pathogen-associated signals, leading to subsequent pyroptosis. Inflammasomes are supramolecular complexes that assemble in the cytosol in response to pathogens and other damage-associated signals and play critical roles in innate immunity and inflammation. Acts as a recognition receptor (PRR): recognizes specific pathogens and other damage-associated signals, and mediates the formation of the inflammasome polymeric complex. In response to pathogen-associated signals, the N-terminal part of Nlrp1a is degraded by the proteasome, releasing the cleaved C-terminal part of the protein (NACHT, LRR and PYD domains-containing protein 1a, C-terminus), which polymerizes to initiate the formation of the inflammasome complex: the inflammasome recruits pro-caspase-1 (proCASP1) and promotes caspase-1 (CASP1) activation, which subsequently cleaves and activates inflammatory cytokines IL1B and IL18 and gasdermin-D (GSDMD), leading to pyroptosis. In the absence of GSDMD expression, the Nlrp1a inflammasome is able to recruit and activate CASP8, leading to activation of gasdermin-E (GSDME). Activation of Nlrp1a inflammasome is also required for HMGB1 secretion; the active cytokines and HMGB1 stimulate inflammatory responses. When activated in the bone marrow, induces the pyroptosis of hematopoietic stem cells and progenitor cells of both myeloid and lymphoid lineages, hence allowing the removal of damaged cells, and the release of IL1B, which induces granulopoiesis. In terms of biological role, constitutes the precursor of the Nlrp1a inflammasome, which mediates autoproteolytic processing within the FIIND domain to generate the N-terminal and C-terminal parts, which are associated non-covalently in absence of pathogens and other damage-associated signals. Functionally, regulatory part that prevents formation of the Nlrp1a inflammasome: in absence of pathogens and other damage-associated signals, interacts with the C-terminal part of Nlrp1a (NACHT, LRR and PYD domains-containing protein 1a, C-terminus), preventing activation of the Nlrp1a inflammasome. In response to pathogen-associated signals, this part is ubiquitinated and degraded by the proteasome, releasing the cleaved C-terminal part of the protein, which polymerizes and forms the Nlrp1a inflammasome. Its function is as follows. Constitutes the active part of the Nlrp1a inflammasome. In absence of pathogens and other damage-associated signals, interacts with the N-terminal part of Nlrp1a (NACHT, LRR and PYD domains-containing protein 1a, N-terminus), preventing activation of the Nlrp1a inflammasome. In response to pathogen-associated signals, the N-terminal part of Nlrp1a is degraded by the proteasome, releasing this form, which polymerizes to form the Nlrp1a inflammasome complex: the Nlrp1a inflammasome complex then directly recruits pro-caspase-1 (proCASP1) and promotes caspase-1 (CASP1) activation, leading to gasdermin-D (GSDMD) cleavage and subsequent pyroptosis. The polypeptide is NACHT, LRR and PYD domains-containing protein 1a (Mus musculus (Mouse)).